The primary structure comprises 70 residues: MTTIRLKENEPFEVAMRRFKRTIEKTGLLTDLRAREFYEKPTAERKRKLAAAVKRHYKRIRSQQLPKKLY.

It belongs to the bacterial ribosomal protein bS21 family.

The sequence is that of Small ribosomal subunit protein bS21 from Herminiimonas arsenicoxydans.